Reading from the N-terminus, the 245-residue chain is 1-(5-phosphoribosyl)-5-[(5-phosphoribosylamino)methylideneamino] imidazole-4-carboxamide isomerase (245 aa).

The active-site Proton acceptor is the Asp7. Asp129 functions as the Proton donor in the catalytic mechanism.

This sequence belongs to the HisA/HisF family.

The protein resides in the cytoplasm. It catalyses the reaction 1-(5-phospho-beta-D-ribosyl)-5-[(5-phospho-beta-D-ribosylamino)methylideneamino]imidazole-4-carboxamide = 5-[(5-phospho-1-deoxy-D-ribulos-1-ylimino)methylamino]-1-(5-phospho-beta-D-ribosyl)imidazole-4-carboxamide. It functions in the pathway amino-acid biosynthesis; L-histidine biosynthesis; L-histidine from 5-phospho-alpha-D-ribose 1-diphosphate: step 4/9. The protein is 1-(5-phosphoribosyl)-5-[(5-phosphoribosylamino)methylideneamino] imidazole-4-carboxamide isomerase of Escherichia coli O127:H6 (strain E2348/69 / EPEC).